The sequence spans 234 residues: Large ribosomal subunit protein uL1 (234 aa).

This sequence belongs to the universal ribosomal protein uL1 family. Part of the 50S ribosomal subunit.

Binds directly to 23S rRNA. The L1 stalk is quite mobile in the ribosome, and is involved in E site tRNA release. Functionally, protein L1 is also a translational repressor protein, it controls the translation of the L11 operon by binding to its mRNA. This is Large ribosomal subunit protein uL1 from Desulfatibacillum aliphaticivorans.